The primary structure comprises 126 residues: Phosphoribosyl-AMP cyclohydrolase (126 aa).

Aspartate 82 lines the Mg(2+) pocket. Cysteine 83 serves as a coordination point for Zn(2+). 2 residues coordinate Mg(2+): aspartate 84 and aspartate 86. Residues cysteine 99 and cysteine 106 each coordinate Zn(2+).

This sequence belongs to the PRA-CH family. In terms of assembly, homodimer. The cofactor is Mg(2+). Zn(2+) serves as cofactor.

The protein localises to the cytoplasm. The enzyme catalyses 1-(5-phospho-beta-D-ribosyl)-5'-AMP + H2O = 1-(5-phospho-beta-D-ribosyl)-5-[(5-phospho-beta-D-ribosylamino)methylideneamino]imidazole-4-carboxamide. It participates in amino-acid biosynthesis; L-histidine biosynthesis; L-histidine from 5-phospho-alpha-D-ribose 1-diphosphate: step 3/9. Functionally, catalyzes the hydrolysis of the adenine ring of phosphoribosyl-AMP. This is Phosphoribosyl-AMP cyclohydrolase from Sphingopyxis alaskensis (strain DSM 13593 / LMG 18877 / RB2256) (Sphingomonas alaskensis).